The chain runs to 171 residues: Methylated-DNA--protein-cysteine methyltransferase (171 aa).

Cys139 acts as the Nucleophile; methyl group acceptor in catalysis.

This sequence belongs to the MGMT family.

Its subcellular location is the cytoplasm. It catalyses the reaction a 6-O-methyl-2'-deoxyguanosine in DNA + L-cysteinyl-[protein] = S-methyl-L-cysteinyl-[protein] + a 2'-deoxyguanosine in DNA. The enzyme catalyses a 4-O-methyl-thymidine in DNA + L-cysteinyl-[protein] = a thymidine in DNA + S-methyl-L-cysteinyl-[protein]. Its function is as follows. Involved in the cellular defense against the biological effects of O6-methylguanine (O6-MeG) and O4-methylthymine (O4-MeT) in DNA. Repairs the methylated nucleobase in DNA by stoichiometrically transferring the methyl group to a cysteine residue in the enzyme. This is a suicide reaction: the enzyme is irreversibly inactivated. The protein is Methylated-DNA--protein-cysteine methyltransferase of Salmonella typhi.